Here is a 337-residue protein sequence, read N- to C-terminus: MSDLKPFVAKVAAREALSREDARAAFEIIMSGAATPSQIGGFLMALRVRGETVDEIVGAVGAMRARMLPVEAPDGAIDIVGTGGDGAGTYNISTLAALIVAGAGVPVAKHGNRALSSKSGTADALSCLGVNLDIGPAVISRCIAEAGLGFMFAQQHHSAMRHVGPTRVELGTRTIFNLLGPLANPAGVRQQLVGVYAPQWVDPLAEVLRDLGSESVWVVHGEGLDEITTTGVTKVAALKDGTITNFELTPADFGLERVSLDALKGGDGAHNAAALQAVLDGAENAYRDISLANAAASLMIAGRAGDLSEGMALARQSLSSGGAKVALQRLITVSNAA.

5-phospho-alpha-D-ribose 1-diphosphate-binding positions include Gly81, Gly84–Asp85, Thr89, Asn91–Thr94, Lys109–Ser117, and Thr121. Position 81 (Gly81) interacts with anthranilate. Ser93 is a Mg(2+) binding site. Asn112 serves as a coordination point for anthranilate. Arg167 is a binding site for anthranilate. Asp225 and Glu226 together coordinate Mg(2+).

The protein belongs to the anthranilate phosphoribosyltransferase family. As to quaternary structure, homodimer. The cofactor is Mg(2+).

It carries out the reaction N-(5-phospho-beta-D-ribosyl)anthranilate + diphosphate = 5-phospho-alpha-D-ribose 1-diphosphate + anthranilate. It participates in amino-acid biosynthesis; L-tryptophan biosynthesis; L-tryptophan from chorismate: step 2/5. Functionally, catalyzes the transfer of the phosphoribosyl group of 5-phosphorylribose-1-pyrophosphate (PRPP) to anthranilate to yield N-(5'-phosphoribosyl)-anthranilate (PRA). This is Anthranilate phosphoribosyltransferase from Rhizobium meliloti (strain 1021) (Ensifer meliloti).